The sequence spans 169 residues: Holo-[acyl-carrier-protein] synthase (169 aa).

Residues Asp-8 and Glu-50 each coordinate Mg(2+).

Belongs to the P-Pant transferase superfamily. AcpS family. Mg(2+) is required as a cofactor.

The protein resides in the cytoplasm. The catalysed reaction is apo-[ACP] + CoA = holo-[ACP] + adenosine 3',5'-bisphosphate + H(+). Functionally, transfers the 4'-phosphopantetheine moiety from coenzyme A to a Ser of acyl-carrier-protein. The polypeptide is Holo-[acyl-carrier-protein] synthase (Thermotoga maritima (strain ATCC 43589 / DSM 3109 / JCM 10099 / NBRC 100826 / MSB8)).